The chain runs to 266 residues: Calpain small subunit 1 (266 aa).

Met-1 is modified (N-acetylmethionine). Ser-6 carries the phosphoserine modification. In terms of domain architecture, EF-hand 1; atypical spans 94–128 (EEVRQFRRLFAQLAGDDMEVSATELMNILNKVVTR). Ca(2+) is bound by residues Ala-107, Asp-110, Glu-112, Glu-117, Asp-135, Asp-150, Asp-152, Thr-154, Lys-156, and Glu-161. 4 EF-hand domains span residues 137–170 (FGLD…NNIK), 167–202 (NNIK…AGFH), 203–231 (LNEH…ISCL), and 232–266 (VRLD…TMYS). N6-acetyllysine is present on Lys-177. The Ca(2+) site is built by Asp-180, Asp-182, Ser-184, Thr-186, Glu-191, and Asp-223.

In terms of assembly, homodimer or heterodimer of a large (catalytic) and a small (regulatory) subunit. In presence of calcium, the heterodimer dissociates. The N-terminus is blocked.

The protein localises to the cytoplasm. It is found in the cell membrane. Regulatory subunit of the calcium-regulated non-lysosomal thiol-protease which catalyzes limited proteolysis of substrates involved in cytoskeletal remodeling and signal transduction. Essential for embryonic development. This Oryctolagus cuniculus (Rabbit) protein is Calpain small subunit 1 (CAPNS1).